The chain runs to 291 residues: Protease HtpX (291 aa).

The next 2 helical transmembrane spans lie at 4 to 24 (IVIF…LLTC) and 37 to 57 (IISG…SKFI). Position 139 (His-139) interacts with Zn(2+). Residue Glu-140 is part of the active site. His-143 contributes to the Zn(2+) binding site. Transmembrane regions (helical) follow at residues 147–167 (GDMV…IFIS) and 195–215 (IVST…VLWF). Glu-220 lines the Zn(2+) pocket.

Belongs to the peptidase M48B family. Zn(2+) is required as a cofactor.

The protein localises to the cell membrane. The sequence is that of Protease HtpX from Baumannia cicadellinicola subsp. Homalodisca coagulata.